A 339-amino-acid polypeptide reads, in one-letter code: DNA-directed RNA polymerase subunit alpha (339 aa).

The segment at M1–E233 is alpha N-terminal domain (alpha-NTD). An alpha C-terminal domain (alpha-CTD) region spans residues G266–F339.

Belongs to the RNA polymerase alpha chain family. As to quaternary structure, in plastids the minimal PEP RNA polymerase catalytic core is composed of four subunits: alpha, beta, beta', and beta''. When a (nuclear-encoded) sigma factor is associated with the core the holoenzyme is formed, which can initiate transcription.

It is found in the plastid. It localises to the chloroplast. The enzyme catalyses RNA(n) + a ribonucleoside 5'-triphosphate = RNA(n+1) + diphosphate. DNA-dependent RNA polymerase catalyzes the transcription of DNA into RNA using the four ribonucleoside triphosphates as substrates. In Agrostis stolonifera (Creeping bentgrass), this protein is DNA-directed RNA polymerase subunit alpha.